The sequence spans 483 residues: Cobyric acid synthase (483 aa).

Residues 251–438 (ALIVAVPMLP…LHGVFSADRF (188 aa)) enclose the GATase cobBQ-type domain. The active-site Nucleophile is cysteine 333. The active site involves histidine 430.

The protein belongs to the CobB/CobQ family. CobQ subfamily.

It participates in cofactor biosynthesis; adenosylcobalamin biosynthesis. Functionally, catalyzes amidations at positions B, D, E, and G on adenosylcobyrinic A,C-diamide. NH(2) groups are provided by glutamine, and one molecule of ATP is hydrogenolyzed for each amidation. The sequence is that of Cobyric acid synthase from Brucella suis biovar 1 (strain 1330).